An 812-amino-acid polypeptide reads, in one-letter code: Plasminogen (812 aa).

An N-terminal signal peptide occupies residues 1-19 (MDHKEIILLFLLFLKPGQG). The PAN domain maps to 20 to 98 (DSLDGYVSTQ…RDVILFEKRV (79 aa)). Intrachain disulfides connect C49/C73, C53/C61, C103/C181, C124/C164, C152/C176, C185/C262, C188/C316, C206/C245, C234/C257, C275/C352, C296/C335, C324/C347, C376/C454, C397/C437, C425/C449, C481/C560, C502/C543, C531/C555, C568/C687, C578/C586, and C609/C625. Kringle domains lie at 102 to 181 (ECKT…IPEC), 184 to 262 (ECMY…IPRC), 274 to 352 (QCLK…IPSC), 375 to 454 (ECYQ…LKRC), and 480 to 560 (DCMY…IPLC). The 229-residue stretch at 582 to 810 (VVGGCVANPH…YVNWIEREMR (229 aa)) folds into the Peptidase S1 domain. S598 carries the post-translational modification Phosphoserine. Catalysis depends on charge relay system residues H624 and D667. S690 carries the phosphoserine modification. Cystine bridges form between C701–C768, C731–C747, and C758–C786. Catalysis depends on S762, which acts as the Charge relay system.

The protein belongs to the peptidase S1 family. Plasminogen subfamily. As to quaternary structure, interacts (both mature PLG and the angiostatin peptide) with AMOT and CSPG4. Interacts (via the Kringle domains) with HRG; the interaction tethers PLG to the cell surface and enhances its activation. Interacts (via Kringle 4 domain) with ADA; the interaction stimulates PLG activation when in complex with DPP4. Angiostatin: Interacts with ATP5F1A; the interaction inhibits most of the angiogenic effects of angiostatin. Post-translationally, in the presence of the inhibitor, the activation involves only cleavage after Arg-581, yielding two chains held together by two disulfide bonds. In the absence of the inhibitor, the activation involves additionally the removal of the activation peptide.

It localises to the secreted. It carries out the reaction Preferential cleavage: Lys-|-Xaa &gt; Arg-|-Xaa, higher selectivity than trypsin. Converts fibrin into soluble products.. Its activity is regulated as follows. Converted into plasmin by plasminogen activators, both plasminogen and its activator being bound to fibrin. Cannot be activated with streptokinase. Plasmin dissolves the fibrin of blood clots and acts as a proteolytic factor in a variety of other processes including embryonic development, tissue remodeling, tumor invasion, and inflammation. In ovulation, weakens the walls of the Graafian follicle. It activates the urokinase-type plasminogen activator, collagenases and several complement zymogens, such as C1, C4 and C5. Cleavage of fibronectin and laminin leads to cell detachment and apoptosis. Also cleaves fibrin, thrombospondin and von Willebrand factor. Its role in tissue remodeling and tumor invasion may be modulated by CSPG4. Binds to cells. Its function is as follows. Angiostatin is an angiogenesis inhibitor that blocks neovascularization and growth of experimental primary and metastatic tumors in vivo. This Rattus norvegicus (Rat) protein is Plasminogen (Plg).